The sequence spans 294 residues: ATP synthase gamma chain (294 aa).

This sequence belongs to the ATPase gamma chain family. As to quaternary structure, F-type ATPases have 2 components, CF(1) - the catalytic core - and CF(0) - the membrane proton channel. CF(1) has five subunits: alpha(3), beta(3), gamma(1), delta(1), epsilon(1). CF(0) has three main subunits: a, b and c.

The protein localises to the cell inner membrane. In terms of biological role, produces ATP from ADP in the presence of a proton gradient across the membrane. The gamma chain is believed to be important in regulating ATPase activity and the flow of protons through the CF(0) complex. The protein is ATP synthase gamma chain of Paramagnetospirillum magneticum (strain ATCC 700264 / AMB-1) (Magnetospirillum magneticum).